The chain runs to 198 residues: Recombination protein RecR (198 aa).

Residues 57 to 72 (CEKCNTFTEAQICEVC) form a C4-type zinc finger. A Toprim domain is found at 80-175 (TLLCVVETPA…AVTRLARGVP (96 aa)).

The protein belongs to the RecR family.

In terms of biological role, may play a role in DNA repair. It seems to be involved in an RecBC-independent recombinational process of DNA repair. It may act with RecF and RecO. This chain is Recombination protein RecR, found in Paraburkholderia phytofirmans (strain DSM 17436 / LMG 22146 / PsJN) (Burkholderia phytofirmans).